The primary structure comprises 273 residues: MLIDIAVNITDKLLAKDESSVEEVIRRCKDSKVLPIFTGLDHQTSKICINLAKKYKTVSTAGIHPTSSSRYSNIDEIVPLVNDETVVAIGECGLDYDRLEFADKVSQKRIFRSQLDLGGSCYFFHSRSCHRDFMEIVSDYRIRGVVHSFTGSIEEARELIKKGLFIGINGCSVKTLEGIEIVRSLPLESLLIETDSPYCKIRRSYAGFEYVTTDFSQQKALKKKNEPCCVVQMAEVVSNATGKDYDLVVETILDNTIGLYGDVLKKSVERWGL.

Residues Glu91, His125, His147, and Asp195 each coordinate a divalent metal cation.

The protein belongs to the metallo-dependent hydrolases superfamily. TatD-type hydrolase family. The cofactor is a divalent metal cation.

It localises to the nucleus. Putative deoxyribonuclease. The sequence is that of Putative deoxyribonuclease TATDN1 homolog from Encephalitozoon cuniculi (strain GB-M1) (Microsporidian parasite).